A 114-amino-acid polypeptide reads, in one-letter code: Flagellar transcriptional regulator FlhD (114 aa).

The protein belongs to the FlhD family. In terms of assembly, homodimer; disulfide-linked. Forms a heterohexamer composed of two FlhC and four FlhD subunits. Each FlhC binds a FlhD dimer, forming a heterotrimer, and a hexamer assembles by dimerization of two heterotrimers.

The protein resides in the cytoplasm. Its function is as follows. Functions in complex with FlhC as a master transcriptional regulator that regulates transcription of several flagellar and non-flagellar operons by binding to their promoter region. Activates expression of class 2 flagellar genes, including fliA, which is a flagellum-specific sigma factor that turns on the class 3 genes. Also regulates genes whose products function in a variety of physiological pathways. This is Flagellar transcriptional regulator FlhD from Wigglesworthia glossinidia brevipalpis.